A 113-amino-acid polypeptide reads, in one-letter code: Flagellar transcriptional regulator FlhD (113 aa).

The protein belongs to the FlhD family. In terms of assembly, homodimer; disulfide-linked. Forms a heterohexamer composed of two FlhC and four FlhD subunits. Each FlhC binds a FlhD dimer, forming a heterotrimer, and a hexamer assembles by dimerization of two heterotrimers.

It localises to the cytoplasm. Functions in complex with FlhC as a master transcriptional regulator that regulates transcription of several flagellar and non-flagellar operons by binding to their promoter region. Activates expression of class 2 flagellar genes, including fliA, which is a flagellum-specific sigma factor that turns on the class 3 genes. Also regulates genes whose products function in a variety of physiological pathways. This Salmonella typhi protein is Flagellar transcriptional regulator FlhD.